The primary structure comprises 114 residues: Large ribosomal subunit protein bL19 (114 aa).

Belongs to the bacterial ribosomal protein bL19 family.

Its function is as follows. This protein is located at the 30S-50S ribosomal subunit interface and may play a role in the structure and function of the aminoacyl-tRNA binding site. This is Large ribosomal subunit protein bL19 (rplS) from Listeria innocua serovar 6a (strain ATCC BAA-680 / CLIP 11262).